Consider the following 262-residue polypeptide: Indole-3-glycerol phosphate synthase (262 aa).

Belongs to the TrpC family.

It carries out the reaction 1-(2-carboxyphenylamino)-1-deoxy-D-ribulose 5-phosphate + H(+) = (1S,2R)-1-C-(indol-3-yl)glycerol 3-phosphate + CO2 + H2O. It functions in the pathway amino-acid biosynthesis; L-tryptophan biosynthesis; L-tryptophan from chorismate: step 4/5. In Clostridium kluyveri (strain NBRC 12016), this protein is Indole-3-glycerol phosphate synthase.